Consider the following 297-residue polypeptide: ClpXP adapter protein SpxH (297 aa).

Belongs to the SpxH family. As to quaternary structure, interacts with Spx.

Its subcellular location is the cytoplasm. Its function is as follows. Adapter protein required for efficient degradation of Spx by ClpXP under non-stress conditions. Interaction with Spx stabilizes Spx and exposes the C-terminus of Spx for recognition and proteolysis by ClpXP. The polypeptide is ClpXP adapter protein SpxH (Bacillus thuringiensis subsp. konkukian (strain 97-27)).